Reading from the N-terminus, the 239-residue chain is MKNFFAVCIIPLVVAWSATASAKEGIYITGKAGTSVVNVYGINSTFSQDEIVNGHATLPDRTKGVFGGGVAIGYDFYDPFQLPVRLELDTTFRGETDAKGGQDIIAFGDPVHINVKNQVRMTTYMVNGYYDFHNSTAFTPYISAGVGLAHVKLSNNTIPVGFGINETLSASKNNFAWGAGIGAKYAVTDNIMIDASYKYINAGKVSISKNHYAGDEHTAYDADTKAASNDFMLGITYAF.

The signal sequence occupies residues 1 to 22; the sequence is MKNFFAVCIIPLVVAWSATASA. Residues 23 to 26 are Periplasmic-facing; that stretch reads KEGI. The chain crosses the membrane as a beta stranded span at residues 27-36; it reads YITGKAGTSV. The Extracellular portion of the chain corresponds to 37–65; the sequence is VNVYGINSTFSQDEIVNGHATLPDRTKGV. A beta stranded membrane pass occupies residues 66–76; sequence FGGGVAIGYDF. Residues 77–81 lie on the Periplasmic side of the membrane; the sequence is YDPFQ. Residues 82–92 form a beta stranded membrane-spanning segment; sequence LPVRLELDTTF. The Extracellular portion of the chain corresponds to 93 to 120; the sequence is RGETDAKGGQDIIAFGDPVHINVKNQVR. Residues 121 to 132 traverse the membrane as a beta stranded segment; it reads MTTYMVNGYYDF. Topologically, residues 133 to 137 are periplasmic; sequence HNSTA. Residues 138–148 form a beta stranded membrane-spanning segment; the sequence is FTPYISAGVGL. At 149-174 the chain is on the extracellular side; the sequence is AHVKLSNNTIPVGFGINETLSASKNN. The beta stranded transmembrane segment at 175-185 threads the bilayer; it reads FAWGAGIGAKY. At 186 to 190 the chain is on the periplasmic side; that stretch reads AVTDN. Residues 191-200 form a beta stranded membrane-spanning segment; sequence IMIDASYKYI. At 201 to 230 the chain is on the extracellular side; sequence NAGKVSISKNHYAGDEHTAYDADTKAASND. The beta stranded transmembrane segment at 231 to 239 threads the bilayer; that stretch reads FMLGITYAF.

It localises to the cell outer membrane. Haemagglutinin that facilitates the adhesion to and invasion of epithelial mammalian cells. Utilizes heparinated proteoglycan as a receptor to successfully invade host cells. This is Outer membrane protein PagN (pagN) from Salmonella typhimurium (strain LT2 / SGSC1412 / ATCC 700720).